The following is a 145-amino-acid chain: Acidic phospholipase A2 S1-11 (145 aa).

The N-terminal stretch at 1–19 (MYPAHLLVLLAVCVSLLGA) is a signal peptide. A propeptide spanning residues 20–27 (SDMPPQPL) is cleaved from the precursor. 5 cysteine pairs are disulfide-bonded: cysteine 38–cysteine 99, cysteine 54–cysteine 144, cysteine 56–cysteine 72, cysteine 71–cysteine 127, and cysteine 106–cysteine 118. Residues tyrosine 55, glycine 57, and glycine 59 each contribute to the Ca(2+) site. The active site involves histidine 75. Aspartate 76 is a binding site for Ca(2+). Aspartate 121 is an active-site residue.

This sequence belongs to the phospholipase A2 family. Group I subfamily. D49 sub-subfamily. Ca(2+) is required as a cofactor. In terms of processing, this enzyme lacks two of the seven disulfide bonds found in similar PLA2 proteins. Expressed by the venom gland.

Its subcellular location is the secreted. It carries out the reaction a 1,2-diacyl-sn-glycero-3-phosphocholine + H2O = a 1-acyl-sn-glycero-3-phosphocholine + a fatty acid + H(+). Functionally, snake venom phospholipase A2 (PLA2) that inhibits collagen-induced platelet aggregation. PLA2 catalyzes the calcium-dependent hydrolysis of the 2-acyl groups in 3-sn-phosphoglycerides. The polypeptide is Acidic phospholipase A2 S1-11 (Austrelaps superbus (Lowland copperhead snake)).